The sequence spans 431 residues: Synaptotagmin-11 (431 aa).

Topologically, residues 1-15 (MAEITNIRPSFDVSP) are vesicular. The chain crosses the membrane as a helical span at residues 16–36 (VVAGLIGASVLVVCVSVTVFV). The Cytoplasmic segment spans residues 37–431 (WSCCHQQAEK…VAKWHSLSEY (395 aa)). Serine 134 is subject to Phosphoserine. A disordered region spans residues 134 to 154 (SPITSLTPGESKTTSPSSPEE). Low complexity predominate over residues 140–151 (TPGESKTTSPSS). 2 consecutive C2 domains span residues 157–279 (MLGS…QLTR) and 291–426 (SRGE…AKWH). Positions 250, 253, and 256 each coordinate Ca(2+).

This sequence belongs to the synaptotagmin family. Homodimer. Can also form heterodimers. Interacts with PRKN. Interacts (via C2 2 domain) with AGO2 and SND1; the interaction with SND1 is direct. Interacts with KIF1A; the interaction increases in presence of calcium. Ca(2+) is required as a cofactor. In terms of processing, ubiquitinated, at least by PRKN, and targeted to the proteasome complex for degradation. Ubiquitination is inhibited by ATP13A2.

Its subcellular location is the cytoplasmic vesicle membrane. It is found in the perikaryon. The protein localises to the golgi apparatus. The protein resides in the trans-Golgi network membrane. It localises to the recycling endosome membrane. Its subcellular location is the lysosome membrane. It is found in the cytoplasmic vesicle. The protein localises to the phagosome. The protein resides in the cell projection. It localises to the axon. Its subcellular location is the dendrite. It is found in the postsynaptic density. The protein localises to the clathrin-coated vesicle membrane. In terms of biological role, synaptotagmin family member involved in vesicular and membrane trafficking which does not bind Ca(2+). Inhibits clathrin-mediated and bulk endocytosis, functions to ensure precision in vesicle retrieval. Plays an important role in dopamine transmission by regulating endocytosis and the vesicle-recycling process. Essential component of a neuronal vesicular trafficking pathway that differs from the synaptic vesicle trafficking pathway but is crucial for development and synaptic plasticity. In macrophages and microglia, inhibits the conventional cytokine secretion, of at least IL6 and TNF, and phagocytosis. In astrocytes, regulates lysosome exocytosis, mechanism required for the repair of injured astrocyte cell membrane. Required for the ATP13A2-mediated regulation of the autophagy-lysosome pathway. The polypeptide is Synaptotagmin-11 (Homo sapiens (Human)).